The chain runs to 498 residues: Glycerol kinase (498 aa).

T12 contacts ADP. The ATP site is built by T12, T13, and S14. T12 lines the sn-glycerol 3-phosphate pocket. R16 lines the ADP pocket. Sn-glycerol 3-phosphate is bound by residues R82, E83, Y134, and D244. 5 residues coordinate glycerol: R82, E83, Y134, D244, and Q245. T266 and G310 together coordinate ADP. ATP-binding residues include T266, G310, Q314, and G411. ADP contacts are provided by G411 and N415.

The protein belongs to the FGGY kinase family.

It catalyses the reaction glycerol + ATP = sn-glycerol 3-phosphate + ADP + H(+). The protein operates within polyol metabolism; glycerol degradation via glycerol kinase pathway; sn-glycerol 3-phosphate from glycerol: step 1/1. Its activity is regulated as follows. Inhibited by fructose 1,6-bisphosphate (FBP). Its function is as follows. Key enzyme in the regulation of glycerol uptake and metabolism. Catalyzes the phosphorylation of glycerol to yield sn-glycerol 3-phosphate. In Azorhizobium caulinodans (strain ATCC 43989 / DSM 5975 / JCM 20966 / LMG 6465 / NBRC 14845 / NCIMB 13405 / ORS 571), this protein is Glycerol kinase.